We begin with the raw amino-acid sequence, 120 residues long: MKTEEIIKSIEAEYLKSDLPIIHVGDTIRVGVRIVEGDKERIQPYEGIVIAKRHGGINETITVRKVFQGVGVERVFLLHSPRVASIKIIRRGKVRRAKLYYLRDRVGKATRVQERFDRPL.

Belongs to the bacterial ribosomal protein bL19 family.

Its function is as follows. This protein is located at the 30S-50S ribosomal subunit interface and may play a role in the structure and function of the aminoacyl-tRNA binding site. This is Large ribosomal subunit protein bL19 from Microcystis aeruginosa (strain NIES-843 / IAM M-2473).